Reading from the N-terminus, the 519-residue chain is Cytochrome P450 709B1 (519 aa).

A helical transmembrane segment spans residues 1–21; it reads MGLVIFLALIVLILIIGLRIF. Residue Cys464 participates in heme binding.

It belongs to the cytochrome P450 family. The cofactor is heme. Highly expressed in siliques.

Its subcellular location is the membrane. In terms of biological role, involved in stress response. Does not function as cytokinin hydroxylase in yeast heterologous system. The chain is Cytochrome P450 709B1 from Arabidopsis thaliana (Mouse-ear cress).